Reading from the N-terminus, the 498-residue chain is GPI mannosyltransferase 4 (498 aa).

A helical membrane pass occupies residues 11 to 31 (FYLLTIVFRFVFTLSDSYIHP). Asn-47 carries N-linked (GlcNAc...) asparagine glycosylation. Residues 63–83 (SLAPLYFIYGPLLYFIKFFKL) form a helical membrane-spanning segment. A glycan (N-linked (GlcNAc...) asparagine) is linked at Asn-84. Transmembrane regions (helical) follow at residues 96–116 (LQIS…MLPS), 140–160 (LFSN…IDDL), 189–209 (LGIF…WFVM), 222–242 (LVMG…ILFG), 247–267 (VVAE…NLLY), 282–302 (YYTH…IFFV), 310–330 (TPFL…HQEL), 332–348 (FLIP…DFTL), and 350–370 (WVQP…SILM). Residues Asn-408 and Asn-473 are each glycosylated (N-linked (GlcNAc...) asparagine).

Belongs to the glycosyltransferase 22 family. PIGZ subfamily.

The protein resides in the endoplasmic reticulum membrane. Its pathway is glycolipid biosynthesis; glycosylphosphatidylinositol-anchor biosynthesis. Functionally, alpha-1,2-mannosyltransferase involved in glycosylphosphatidylinositol-anchor biosynthesis. Transfers a fourth mannose to trimannosyl-GPIs during GPI precursor assembly. The presence of a fourth mannose in GPI is essential in fungi. The polypeptide is GPI mannosyltransferase 4 (SMP3) (Candida albicans (strain SC5314 / ATCC MYA-2876) (Yeast)).